The chain runs to 2184 residues: Genome polyprotein (2184 aa).

Glycine 2 is lipidated: N-myristoyl glycine; by host. Over 2 to 1494 (GAQVSTQKTG…HVSRAFICLQ (1493 aa)) the chain is Cytoplasmic. The segment at 567-583 (FYQGDVQNAVEGAMVRV) is amphipathic alpha-helix. Catalysis depends on for protease 2A activity residues histidine 871 and aspartate 889. Cysteine 906 and cysteine 908 together coordinate Zn(2+). The For protease 2A activity role is filled by cysteine 960. 2 residues coordinate Zn(2+): cysteine 966 and histidine 968. Residues 1100 to 1172 (NNGWLKKFTE…EQSAPSQGDQ (73 aa)) form a membrane-binding region. Residues 1100-1238 (NNGWLKKFTE…SPGAGKSVAT (139 aa)) are oligomerization. Positions 1121–1125 (AIKIQ) are RNA-binding. The SF3 helicase domain maps to 1204 to 1360 (EKKMSNYIQF…SMYSQNGKIN (157 aa)). Positions 1368, 1380, and 1385 each coordinate Zn(2+). Residues 1368–1385 (CDEDCCPVNFKKCCPLVC) form a C4-type; degenerate zinc finger. Residues 1412 to 1419 (EYNHRHSV) form an RNA-binding region. The tract at residues 1423 to 1428 (LEALFQ) is oligomerization. The stretch at 1495–1510 (ALTTFVSVAGIIYIIY) is an intramembrane region. Residues 1511–2184 (KLFAGFQGAY…TLRRKWLDSF (674 aa)) lie on the Cytoplasmic side of the membrane. O-(5'-phospho-RNA)-tyrosine is present on tyrosine 1520. The region spanning 1540–1718 (GPAFEFAVAM…FSAALLRHYF (179 aa)) is the Peptidase C3 domain. Active-site for protease 3C activity residues include histidine 1579, glutamate 1610, and cysteine 1686. The RdRp catalytic domain maps to 1949–2065 (GHLIAFDYSG…SYPWPIDASL (117 aa)). The Mg(2+) site is built by aspartate 1955 and aspartate 2051.

The protein belongs to the picornaviruses polyprotein family. Interacts with capsid protein VP1 and capsid protein VP3 to form heterotrimeric protomers. In terms of assembly, interacts with capsid protein VP0, and capsid protein VP3 to form heterotrimeric protomers. Five protomers subsequently associate to form pentamers which serve as building blocks for the capsid. Interacts with capsid protein VP2, capsid protein VP3 and capsid protein VP4 following cleavage of capsid protein VP0. As to quaternary structure, interacts with capsid protein VP1 and capsid protein VP3 in the mature capsid. Interacts with capsid protein VP0 and capsid protein VP1 to form heterotrimeric protomers. Five protomers subsequently associate to form pentamers which serve as building blocks for the capsid. Interacts with capsid protein VP4 in the mature capsid. Interacts with protein 2C; this interaction may be important for virion morphogenesis. In terms of assembly, interacts with capsid protein VP1 and capsid protein VP3. As to quaternary structure, homodimer. Homohexamer; forms a hexameric ring structure with 6-fold symmetry characteristic of AAA+ ATPases. Interacts (via N-terminus) with host RTN3 (via reticulon domain); this interaction is important for viral replication. Interacts with capsid protein VP3; this interaction may be important for virion morphogenesis. In terms of assembly, interacts with protein 3CD. As to quaternary structure, homodimer. Interacts with host GBF1. Interacts (via GOLD domain) with host ACBD3 (via GOLD domain); this interaction allows the formation of a viral protein 3A/ACBD3 heterotetramer with a 2:2 stoichiometry, which will stimulate the recruitment of host PI4KB in order to synthesize PI4P at the viral RNA replication sites. Interacts with RNA-directed RNA polymerase. In terms of assembly, interacts with protein 3AB and with RNA-directed RNA polymerase. As to quaternary structure, interacts with Viral protein genome-linked and with protein 3CD. The cofactor is Mg(2+). Specific enzymatic cleavages in vivo by the viral proteases yield processing intermediates and the mature proteins. In terms of processing, myristoylation is required for the formation of pentamers during virus assembly. Further assembly of 12 pentamers and a molecule of genomic RNA generates the provirion. Post-translationally, during virion maturation, immature virions are rendered infectious following cleavage of VP0 into VP4 and VP2. This maturation seems to be an autocatalytic event triggered by the presence of RNA in the capsid and it is followed by a conformational change infectious virion. Myristoylation is required during RNA encapsidation and formation of the mature virus particle. In terms of processing, VPg is uridylylated by the polymerase into VPg-pUpU. This acts as a nucleotide-peptide primer for the genomic RNA replication.

The protein resides in the virion. It is found in the host cytoplasm. It localises to the host cytoplasmic vesicle membrane. Its subcellular location is the host nucleus. The enzyme catalyses a ribonucleoside 5'-triphosphate + H2O = a ribonucleoside 5'-diphosphate + phosphate + H(+). The catalysed reaction is Selective cleavage of Tyr-|-Gly bond in the picornavirus polyprotein.. It catalyses the reaction RNA(n) + a ribonucleoside 5'-triphosphate = RNA(n+1) + diphosphate. It carries out the reaction Selective cleavage of Gln-|-Gly bond in the poliovirus polyprotein. In other picornavirus reactions Glu may be substituted for Gln, and Ser or Thr for Gly.. Replication or transcription is subject to high level of random mutations by the nucleotide analog ribavirin. Functionally, forms an icosahedral capsid of pseudo T=3 symmetry with capsid proteins VP2 and VP3. The capsid is 300 Angstroms in diameter, composed of 60 copies of each capsid protein and enclosing the viral positive strand RNA genome. Capsid protein VP1 mainly forms the vertices of the capsid. Capsid protein VP1 interacts with host ITGA2/ITGB1 to provide virion attachment to target host cells. This attachment induces virion internalization predominantly through caveolin-mediated endocytosis. Tyrosine kinases are probably involved in the entry process. After binding to its receptor, the capsid undergoes conformational changes. Capsid protein VP1 N-terminus (that contains an amphipathic alpha-helix) and capsid protein VP4 are externalized. Together, they shape a pore in the host membrane through which viral genome is translocated to host cell cytoplasm. Its function is as follows. Forms an icosahedral capsid of pseudo T=3 symmetry with capsid proteins VP2 and VP3. The capsid is 300 Angstroms in diameter, composed of 60 copies of each capsid protein and enclosing the viral positive strand RNA genome. Lies on the inner surface of the capsid shell. After binding to the host receptor, the capsid undergoes conformational changes. Capsid protein VP4 is released, Capsid protein VP1 N-terminus is externalized, and together, they shape a pore in the host membrane through which the viral genome is translocated into the host cell cytoplasm. In terms of biological role, component of immature procapsids, which is cleaved into capsid proteins VP4 and VP2 after maturation. Allows the capsid to remain inactive before the maturation step. Functionally, cysteine protease that cleaves viral polyprotein and specific host proteins. It is responsible for the autocatalytic cleavage between the P1 and P2 regions, which is the first cleavage occurring in the polyprotein. Also cleaves the host translation initiation factor EIF4G1, in order to shut down the capped cellular mRNA translation. Inhibits the host nucleus-cytoplasm protein and RNA trafficking by cleaving host members of the nuclear pores. Counteracts stress granule formation probably by antagonizing its assembly or promoting its dissassembly. Its function is as follows. Plays an essential role in the virus replication cycle by acting as a viroporin. Creates a pore in the host endoplasmic reticulum and as a consequence releases Ca2+ in the cytoplasm of infected cell. In turn, high levels of cytoplasmic calcium may trigger membrane trafficking and transport of viral ER-associated proteins to viroplasms, sites of viral genome replication. Induces and associates with structural rearrangements of intracellular membranes. Displays RNA-binding, nucleotide binding and NTPase activities. May play a role in virion morphogenesis and viral RNA encapsidation by interacting with the capsid protein VP3. In terms of biological role, localizes the viral replication complex to the surface of membranous vesicles. Together with protein 3CD binds the Cis-Active RNA Element (CRE) which is involved in RNA synthesis initiation. Acts as a cofactor to stimulate the activity of 3D polymerase, maybe through a nucleid acid chaperone activity. Functionally, localizes the viral replication complex to the surface of membranous vesicles. It inhibits host cell endoplasmic reticulum-to-Golgi apparatus transport and causes the disassembly of the Golgi complex, possibly through GBF1 interaction. This would result in depletion of MHC, trail receptors and IFN receptors at the host cell surface. Plays an essential role in viral RNA replication by recruiting ACBD3 and PI4KB at the viral replication sites, thereby allowing the formation of the rearranged membranous structures where viral replication takes place. Its function is as follows. Acts as a primer for viral RNA replication and remains covalently bound to viral genomic RNA. VPg is uridylylated prior to priming replication into VPg-pUpU. The oriI viral genomic sequence may act as a template for this. The VPg-pUpU is then used as primer on the genomic RNA poly(A) by the RNA-dependent RNA polymerase to replicate the viral genome. During genome replication, the VPg-RNA linkage is removed by the host TDP2, thereby accelerating replication. During the late stage of the replication cycle, host TDP2 is excluded from sites of viral RNA synthesis and encapsidation, allowing for the generation of progeny virions. Involved in the viral replication complex and viral polypeptide maturation. It exhibits protease activity with a specificity and catalytic efficiency that is different from protease 3C. Protein 3CD lacks polymerase activity. Protein 3CD binds to the 5'UTR of the viral genome. In terms of biological role, replicates the viral genomic RNA on the surface of intracellular membranes. May form linear arrays of subunits that propagate along a strong head-to-tail interaction called interface-I. Covalently attaches UMP to a tyrosine of VPg, which is used to prime RNA synthesis. The positive stranded RNA genome is first replicated at virus induced membranous vesicles, creating a dsRNA genomic replication form. This dsRNA is then used as template to synthesize positive stranded RNA genomes. ss(+)RNA genomes are either translated, replicated or encapsidated. Functionally, major viral protease that mediates proteolytic processing of the polyprotein. Cleaves host EIF5B, contributing to host translation shutoff. Also cleaves host PABPC1, contributing to host translation shutoff. Cleaves host NLRP1, triggers host N-glycine-mediated degradation of the autoinhibitory NLRP1 N-terminal fragment. The protein is Genome polyprotein of Homo sapiens (Human).